The chain runs to 507 residues: ATP synthase subunit alpha, chloroplastic (507 aa).

170 to 177 (GDRQTGKT) is a binding site for ATP.

Belongs to the ATPase alpha/beta chains family. In terms of assembly, F-type ATPases have 2 components, CF(1) - the catalytic core - and CF(0) - the membrane proton channel. CF(1) has five subunits: alpha(3), beta(3), gamma(1), delta(1), epsilon(1). CF(0) has four main subunits: a, b, b' and c.

It localises to the plastid. It is found in the chloroplast thylakoid membrane. It catalyses the reaction ATP + H2O + 4 H(+)(in) = ADP + phosphate + 5 H(+)(out). Its function is as follows. Produces ATP from ADP in the presence of a proton gradient across the membrane. The alpha chain is a regulatory subunit. This Anthoceros angustus (Hornwort) protein is ATP synthase subunit alpha, chloroplastic.